Consider the following 429-residue polypeptide: tRNA modification GTPase MnmE (429 aa).

Arg-20, Glu-77, and Arg-117 together coordinate (6S)-5-formyl-5,6,7,8-tetrahydrofolate. Positions 213–353 (GFEVAILGAP…LVKAVSHRLS (141 aa)) constitute a TrmE-type G domain. Position 223 (Asn-223) interacts with K(+). GTP is bound by residues 223-228 (NVGKSS), 242-248 (SSIAGTT), and 267-270 (DTAG). Ser-227 contacts Mg(2+). Ser-242, Ile-244, and Thr-247 together coordinate K(+). Thr-248 is a binding site for Mg(2+). Lys-429 contributes to the (6S)-5-formyl-5,6,7,8-tetrahydrofolate binding site.

This sequence belongs to the TRAFAC class TrmE-Era-EngA-EngB-Septin-like GTPase superfamily. TrmE GTPase family. Homodimer. Heterotetramer of two MnmE and two MnmG subunits. The cofactor is K(+).

It localises to the cytoplasm. Exhibits a very high intrinsic GTPase hydrolysis rate. Involved in the addition of a carboxymethylaminomethyl (cmnm) group at the wobble position (U34) of certain tRNAs, forming tRNA-cmnm(5)s(2)U34. The sequence is that of tRNA modification GTPase MnmE from Dinoroseobacter shibae (strain DSM 16493 / NCIMB 14021 / DFL 12).